Reading from the N-terminus, the 338-residue chain is MTDQAAFDTNIVTLTRFVMEEGRKARGTGEMTQLLNSLCTAVKAISTAVRKAGIAHLYGIAGSTNVTGDQVKKLDVLSNDLVINVLKSSFATCVLVSEEDKNAIIVEPEKRGKYVVCFDPLDGSSNIDCLVSIGTIFGIYRKNSTDEPSEKDALQPGRNLVAAGYALYGSATMLVLAMVNGVNCFMLDPAIGEFILVDRDVKIKKKGSIYSINEGYAKEFDPAITEYIQRKKFPPDNSAPYGARYVGSMVADVHRTLVYGGIFMYPANKKSPKGKLRLLYECNPMAYVMEKAGGLATTGKEAVLDIVPTDIHQRAPIILGSPEDVTELLEIYQKHAAK.

Threonine 2 is modified (N-acetylthreonine). AMP-binding positions include 18–22 (VMEEG) and 28–32 (TGEMT). Positions 69 and 98 each coordinate Mg(2+). 113–114 (KY) is an AMP binding site. Mg(2+)-binding residues include aspartate 119, leucine 121, and aspartate 122. 122–125 (DGSS) is a substrate binding site. Residue arginine 141 coordinates AMP. Lysine 151 carries the post-translational modification N6-succinyllysine. The residue at position 208 (serine 208) is a Phosphoserine; by PKA. Substrate-binding positions include 213–216 (NEGY), 244–249 (RYVGSM), tyrosine 265, and 275–277 (KLR). Tyrosine 216, tyrosine 245, and tyrosine 265 each carry phosphotyrosine. Mg(2+) is bound at residue glutamate 281.

It belongs to the FBPase class 1 family. As to quaternary structure, homotetramer. The cofactor is Mg(2+).

The enzyme catalyses beta-D-fructose 1,6-bisphosphate + H2O = beta-D-fructose 6-phosphate + phosphate. The protein operates within carbohydrate biosynthesis; gluconeogenesis. With respect to regulation, subject to complex allosteric regulation. The enzyme can assume an active R-state, or an inactive T-state. Intermediate conformations may exist. AMP acts as an allosteric inhibitor. AMP binding affects the turnover of bound substrate and not the affinity for substrate. Fructose 2,6-bisphosphate acts as a competitive inhibitor. Fructose 2,6-bisphosphate and AMP have synergistic effects. Functionally, catalyzes the hydrolysis of fructose 1,6-bisphosphate to fructose 6-phosphate in the presence of divalent cations, acting as a rate-limiting enzyme in gluconeogenesis. Plays a role in regulating glucose sensing and insulin secretion of pancreatic beta-cells. Appears to modulate glycerol gluconeogenesis in liver. Important regulator of appetite and adiposity; increased expression of the protein in liver after nutrient excess increases circulating satiety hormones and reduces appetite-stimulating neuropeptides and thus seems to provide a feedback mechanism to limit weight gain. In Sus scrofa (Pig), this protein is Fructose-1,6-bisphosphatase 1 (FBP1).